Here is a 92-residue protein sequence, read N- to C-terminus: Beta-2-microglobulin (92 aa).

The Ig-like C1-type domain maps to 2–89; the sequence is PQIQVYSRHP…NHVSMDKPMT (88 aa). Cysteines 22 and 77 form a disulfide.

This sequence belongs to the beta-2-microglobulin family. Heterodimer of an alpha chain and a beta chain. Beta-2-microglobulin is the beta-chain of major histocompatibility complex class I molecules.

Its subcellular location is the secreted. Functionally, component of the class I major histocompatibility complex (MHC). Involved in the presentation of peptide antigens to the immune system. The sequence is that of Beta-2-microglobulin (B2m) from Mus spretus (Western Mediterranean mouse).